Consider the following 138-residue polypeptide: Lymphocyte antigen 6L (138 aa).

The N-terminal stretch at 1–16 (MERLVLTLCTLPLAVA) is a signal peptide. A glycan (N-linked (GlcNAc...) asparagine) is linked at asparagine 27. The UPAR/Ly6 domain maps to 28–122 (LSCYQCFKVS…TPQEGRWALR (95 aa)). 2 disulfides stabilise this stretch: cysteine 30–cysteine 47 and cysteine 103–cysteine 108. A lipid anchor (GPI-anchor amidated glycine) is attached at glycine 117. A propeptide spans 118 to 138 (RWALRGGLLLQVGLSLLRALL) (removed in mature form).

The protein localises to the cell membrane. This is Lymphocyte antigen 6L from Homo sapiens (Human).